We begin with the raw amino-acid sequence, 539 residues long: Dopamine receptor 2 (539 aa).

Residues 1–113 (MVDDNGSSPE…LPNDRVGLLA (113 aa)) lie on the Extracellular side of the membrane. N-linked (GlcNAc...) asparagine glycosylation is found at asparagine 5, asparagine 31, asparagine 47, and asparagine 68. A helical transmembrane segment spans residues 114-134 (FLFLFSFATVFGNSLVILAVI). Residues 135 to 145 (RERYLHTATNY) lie on the Cytoplasmic side of the membrane. Residues 146 to 166 (FITSLAVADCLVGLVVMPFSA) form a helical membrane-spanning segment. The Extracellular portion of the chain corresponds to 167–189 (LYEVLENTWFFGTDWCDIWRSLD). Cysteines 182 and 261 form a disulfide. Residues 190-206 (VLFSTASILNLCVISLD) traverse the membrane as a helical segment. At 207–227 (RYWAITDPFSYPMRMTVKRAA) the chain is on the cytoplasmic side. The chain crosses the membrane as a helical span at residues 228 to 248 (GLIAAVWICSSAISFPAIVWW). Topologically, residues 249 to 266 (RAARDGEMPAYKCTFTEH) are extracellular. Residues 267 to 287 (LGYLVFSSTISFYLPLLVMVF) traverse the membrane as a helical segment. Residues 288–420 (TYCRIYRAAV…FAKEKKAAKT (133 aa)) lie on the Cytoplasmic side of the membrane. The segment at 326-387 (GGTTRDQQNQ…EPDDEPLSAL (62 aa)) is disordered. The segment covering 337-352 (SGGGGGGGGGGGGGGS) has biased composition (gly residues). Residues 356-367 (SHSHSHHHHHNH) are compositionally biased toward basic residues. A helical membrane pass occupies residues 421-441 (LGIVMGVFIICWLPFFVVNLL). Topologically, residues 442 to 453 (SGFCIECIEHEE) are extracellular. Residues 454–474 (IVSAIVTWLGWINSCMNPVIY) traverse the membrane as a helical segment. Over 475–539 (ACWSRDFRRA…RHNSCEQTYI (65 aa)) the chain is Cytoplasmic. S-palmitoyl cysteine attachment occurs at residues cysteine 492 and cysteine 493.

This sequence belongs to the G-protein coupled receptor 1 family. In terms of tissue distribution, expressed in both central and peripheral nervous systems.

The protein localises to the cell membrane. Functionally, receptor for dopamine. The activity of this receptor is mediated by G proteins which activate adenylyl cyclase. Also capable of generating a calcium signal. In terms of antagonist responses, would be classed with the D1-like dopamine receptor group. This receptor is an attractive candidate for initiating biochemical cascades underlying olfactory learning. The chain is Dopamine receptor 2 (Dop1R2) from Drosophila melanogaster (Fruit fly).